A 292-amino-acid chain; its full sequence is 11-beta-hydroxysteroid dehydrogenase 1 (292 aa).

Topologically, residues 1–7 are cytoplasmic; it reads MAFMKKY. A helical; Signal-anchor for type II membrane protein transmembrane segment spans residues 8 to 24; sequence LLPILGLFMAYYYYSAN. The Lumenal segment spans residues 25–292; sequence EEFRPEMLQG…SYNMDRFINK (268 aa). Residues 41 to 67, 92 to 93, and 119 to 121 contribute to the NADP(+) site; these read GASKGIGREMAYHLAKMGAHVVVTARS, TM, and NHI. 2 N-linked (GlcNAc...) asparagine glycosylation sites follow: Asn-123 and Asn-162. Residue Ser-170 coordinates substrate. Tyr-183 functions as the Proton acceptor in the catalytic mechanism. 183–187 contacts NADP(+); sequence YSASK. Residue Asn-207 is glycosylated (N-linked (GlcNAc...) asparagine). Residue 218 to 222 coordinates NADP(+); sequence IDTET.

The protein belongs to the short-chain dehydrogenases/reductases (SDR) family. As to quaternary structure, homodimer. In terms of processing, glycosylated. Widely expressed, highest expression in liver, lower in testis, ovary, lung, foreskin fibroblasts, and much lower in kidney. Expressed in liver (at protein level). Expressed in the basal cells of the corneal epithelium and in the ciliary nonpigmented epithelium (both at mRNA and at protein level).

The protein localises to the endoplasmic reticulum membrane. It carries out the reaction an 11beta-hydroxysteroid + NADP(+) = an 11-oxosteroid + NADPH + H(+). It catalyses the reaction cortisone + NADPH + H(+) = cortisol + NADP(+). The catalysed reaction is corticosterone + NADP(+) = 11-dehydrocorticosterone + NADPH + H(+). The enzyme catalyses a 7beta-hydroxysteroid + NADP(+) = a 7-oxosteroid + NADPH + H(+). It carries out the reaction 7-oxocholesterol + NADPH + H(+) = 7beta-hydroxycholesterol + NADP(+). It catalyses the reaction chenodeoxycholate + NADP(+) = 7-oxolithocholate + NADPH + H(+). The catalysed reaction is 7-oxolithocholate + NADPH + H(+) = ursodeoxycholate + NADP(+). The enzyme catalyses glycochenodeoxycholate + NADP(+) = 7-oxoglycolithocholate + NADPH + H(+). It carries out the reaction taurochenodeoxycholate + NADP(+) = 7-oxotaurolithocholate + NADPH + H(+). It catalyses the reaction tauroursodeoxycholate + NADP(+) = 7-oxotaurolithocholate + NADPH + H(+). The catalysed reaction is glycoursodeoxycholate + NADP(+) = 7-oxoglycolithocholate + NADPH + H(+). The enzyme catalyses 7-oxopregnenolone + NADPH + H(+) = 7beta-hydroxypregnenolone + NADP(+). It carries out the reaction 3beta,7alpha-dihydroxyandrost-5-en-17-one + NADP(+) = 3beta-hydroxy-5-androstene-7,17-dione + NADPH + H(+). It catalyses the reaction 3beta-hydroxy-5-androstene-7,17-dione + NADPH + H(+) = 3beta,7beta-dihydroxyandrost-5-en-17-one + NADP(+). The catalysed reaction is 3beta-hydroxy-5alpha-androstane-7,17-dione + NADPH + H(+) = 3beta,7beta-dihydroxy-5alpha-androstan-17-one + NADP(+). The protein operates within steroid metabolism. With respect to regulation, hexose-6-phosphate dehydrogenase (H6PD) provides cosubstrate NADPH, and the glucose-6-phosphate transporter in the ER-membrane supplies the substrate for H6PDH, their activities stimulate the reduction of cortisone and abolish the oxidation of cortisol. In terms of biological role, controls the reversible conversion of biologically active glucocorticoids such as cortisone to cortisol, and 11-dehydrocorticosterone to corticosterone in the presence of NADP(H). Participates in the corticosteroid receptor-mediated anti-inflammatory response, as well as metabolic and homeostatic processes. Plays a role in the secretion of aqueous humor in the eye, maintaining a normotensive, intraocular environment. Bidirectional in vitro, predominantly functions as a reductase in vivo, thereby increasing the concentration of active glucocorticoids. It has broad substrate specificity, besides glucocorticoids, it accepts other steroid and sterol substrates. Interconverts 7-oxo- and 7-hydroxy-neurosteroids such as 7-oxopregnenolone and 7beta-hydroxypregnenolone, 7-oxodehydroepiandrosterone (3beta-hydroxy-5-androstene-7,17-dione) and 7beta-hydroxydehydroepiandrosterone (3beta,7beta-dihydroxyandrost-5-en-17-one), among others. Catalyzes the stereo-specific conversion of the major dietary oxysterol, 7-ketocholesterol (7-oxocholesterol), into the more polar 7-beta-hydroxycholesterol metabolite. 7-oxocholesterol is one of the most important oxysterols, it participates in several events such as induction of apoptosis, accumulation in atherosclerotic lesions, lipid peroxidation, and induction of foam cell formation. Mediates the 7-oxo reduction of 7-oxolithocholate mainly to chenodeoxycholate, and to a lesser extent to ursodeoxycholate, both in its free form and when conjugated to glycine or taurine, providing a link between glucocorticoid activation and bile acid metabolism. Catalyzes the synthesis of 7-beta-25-dihydroxycholesterol from 7-oxo-25-hydroxycholesterol in vitro, which acts as a ligand for the G-protein-coupled receptor (GPCR) Epstein-Barr virus-induced gene 2 (EBI2) and may thereby regulate immune cell migration. This Homo sapiens (Human) protein is 11-beta-hydroxysteroid dehydrogenase 1.